The chain runs to 520 residues: Cobyric acid synthase (520 aa).

Positions 254–465 (ELDIAVVRLP…IHGILDNDGL (212 aa)) constitute a GATase cobBQ-type domain. Catalysis depends on cysteine 335, which acts as the Nucleophile. Histidine 457 is a catalytic residue.

This sequence belongs to the CobB/CobQ family. CobQ subfamily.

It participates in cofactor biosynthesis; adenosylcobalamin biosynthesis. In terms of biological role, catalyzes amidations at positions B, D, E, and G on adenosylcobyrinic A,C-diamide. NH(2) groups are provided by glutamine, and one molecule of ATP is hydrogenolyzed for each amidation. In Sorangium cellulosum (strain So ce56) (Polyangium cellulosum (strain So ce56)), this protein is Cobyric acid synthase.